A 195-amino-acid chain; its full sequence is MRSASISRKTAETDIAVSVNLDGTGRSNIATGIGFLDHMLDLLARHALFDLDVKVDGDLHIDQHHSAEDCGIALGQAFAKALGDKRGVTRYADIHLPMDEALTRVCVDISGRPFLVFRTTFRVEKIGTFDTELVREWFQAFAMNAGLTLHVETLYGDNAHHIAESCYKGLARALRKAVAIDPREEGRVPSTKGSL.

This sequence belongs to the imidazoleglycerol-phosphate dehydratase family.

It localises to the cytoplasm. The enzyme catalyses D-erythro-1-(imidazol-4-yl)glycerol 3-phosphate = 3-(imidazol-4-yl)-2-oxopropyl phosphate + H2O. It functions in the pathway amino-acid biosynthesis; L-histidine biosynthesis; L-histidine from 5-phospho-alpha-D-ribose 1-diphosphate: step 6/9. This chain is Imidazoleglycerol-phosphate dehydratase, found in Methylobacterium radiotolerans (strain ATCC 27329 / DSM 1819 / JCM 2831 / NBRC 15690 / NCIMB 10815 / 0-1).